A 267-amino-acid polypeptide reads, in one-letter code: Nus factor SuhB (267 aa).

Glu-67, Asp-84, and Leu-86 together coordinate Mg(2+). Glu-67 provides a ligand contact to substrate. Residues 86-89 (LDGT), Arg-183, and Asp-212 each bind substrate.

The protein belongs to the inositol monophosphatase superfamily. Homodimer. The rRNA transcription and antitermination complex (rrnTAC) consists of RNA polymerase (RNAP), NusA, NusB, NusE (rpsJ), NusG, SubB, ribosomal protein S4, DNA and precursor rRNA; S4 is more flexible than other subunits. Mg(2+) serves as cofactor.

It localises to the cytoplasm. It catalyses the reaction a myo-inositol phosphate + H2O = myo-inositol + phosphate. Part of the processive rRNA transcription and antitermination complex (rrnTAC). The complex forms an RNA-chaperone ring around the RNA exit tunnel of RNA polymerase (RNAP). It supports rapid transcription and antitermination of rRNA operons, cotranscriptional rRNA folding, and annealing of distal rRNA regions to allow correct ribosome biogenesis. This subunit may play a central role in organizing the structure. The protein is Nus factor SuhB of Vibrio cholerae serotype O1 (strain ATCC 39315 / El Tor Inaba N16961).